We begin with the raw amino-acid sequence, 119 residues long: Parathyroid hormone (119 aa).

Positions 1-25 are cleaved as a signal peptide; the sequence is MTSTKNLAKAIVILYAICFFTNSDG. A propeptide spanning residues 26 to 31 is cleaved from the precursor; it reads RPMMKR.

This sequence belongs to the parathyroid hormone family. As to quaternary structure, interacts with PTH1R (via N-terminal extracellular domain).

The protein localises to the secreted. Parathyroid hormone elevates calcium level by dissolving the salts in bone and preventing their renal excretion. Acts by binding to its receptor, PTH1R, activating G protein-coupled receptor signaling. Stimulates [1-14C]-2-deoxy-D-glucose (2DG) transport and glycogen synthesis in osteoblastic cells. The polypeptide is Parathyroid hormone (Gallus gallus (Chicken)).